The chain runs to 400 residues: 3-phenylpropionate/cinnamic acid dioxygenase ferredoxin--NAD(+) reductase component (400 aa).

Thr5 to Asp36 contributes to the FAD binding site. Ser146 to Glu174 lines the NAD(+) pocket.

Belongs to the bacterial ring-hydroxylating dioxygenase ferredoxin reductase family. This dioxygenase system consists of four proteins: the two subunits of the hydroxylase component (HcaE and HcaF), a ferredoxin (HcaC) and a ferredoxin reductase (HcaD). FAD is required as a cofactor.

It catalyses the reaction 2 reduced [2Fe-2S]-[ferredoxin] + NAD(+) + H(+) = 2 oxidized [2Fe-2S]-[ferredoxin] + NADH. Its pathway is aromatic compound metabolism; 3-phenylpropanoate degradation. Part of the multicomponent 3-phenylpropionate dioxygenase, that converts 3-phenylpropionic acid (PP) and cinnamic acid (CI) into 3-phenylpropionate-dihydrodiol (PP-dihydrodiol) and cinnamic acid-dihydrodiol (CI-dihydrodiol), respectively. The chain is 3-phenylpropionate/cinnamic acid dioxygenase ferredoxin--NAD(+) reductase component from Escherichia coli O157:H7.